The sequence spans 429 residues: MSIQEDGLEPMLLAIGIDSFDTPLAGCTTHFTSILAYTLSIHGYRLADYPWLVRLNPAVPWKTRGNGATALLVSVDREDEARRVAEEVTSRLAKAYGSTGKESFVAILLYHADNLQDYITARPHCLVELYRRAVHELVPLKTAMNCLESIREDGKTKLIALHGSTHRGLVGALAALGADLITDHTFELIVYRKPRMWSEPRRIDEDSIIEFDLKTRPLTFLNYDYEQSKPLIAPHGFDPVLYGVRGEEPHILLKALKIIDVEEEPSHWTIFRTNQATNAHLQRKEIERVRPYDNAIVCGVIEDTKPIPGGHVIVRLCNNTCIDTAFYRETGRLRNHVLKLPRGTLVEVGGQVKPHTDKLTLNAEYLRILEPASLRAGGCTATIPSGRNVILYPPRAAFHHLMKPPERPLHPSKSLEPPSTPIHSDTISL.

A disordered region spans residues 403-429; sequence KPPERPLHPSKSLEPPSTPIHSDTISL.

This sequence belongs to the TiaS family.

The protein resides in the cytoplasm. It catalyses the reaction cytidine(34) in tRNA(Ile2) + agmatine + ATP + H2O = 2-agmatinylcytidine(34) in tRNA(Ile2) + AMP + 2 phosphate + 2 H(+). Its function is as follows. ATP-dependent agmatine transferase that catalyzes the formation of 2-agmatinylcytidine (agm2C) at the wobble position (C34) of tRNA(Ile2), converting the codon specificity from AUG to AUA. This chain is tRNA(Ile2) 2-agmatinylcytidine synthetase TiaS, found in Hyperthermus butylicus (strain DSM 5456 / JCM 9403 / PLM1-5).